The primary structure comprises 386 residues: MSFFHGVTVTNVDIGARTIALPASSVIGLCDVFTPGAQASAKPNVPVLLTSKKDAAAAFGIGSSIYLACEAIYNRAQAVIVAVGVEAAETPEAQASAVIGGVSAAGERTGLQALLDGKSRFNAQPRLLVAPGHSAQQAVATAMDGLAEKLRAIAILDGPNSTDEAAVAYAKNFGSKRLFMVDPGVQVWDSATNAARKAPASAYAAGLFAWTDAEYGFWSSPSNKEIKGITGTSRPVEFLDGDETCRANLLNNANIATIIRDDGYRLWGNRTLSSDSKWAFVTRVRTMDLVMDAILAGHKWAVDRGITKTYVKDVTEGLRAFMRDLKNQGAVINFEVYADPDLNSASQLAQGKVYWNIRFTDVPPAENPNFRVEVTDQWLTEVLDVA.

This sequence belongs to the myoviridae tail sheath protein family.

It is found in the secreted. This chain is Putative prophage major tail sheath protein, found in Pseudomonas aeruginosa (strain UCBPP-PA14).